Consider the following 332-residue polypeptide: Biotin synthase (332 aa).

Residues 53–282 (HFGKKVKLNM…TKEIRISGGR (230 aa)) form the Radical SAM core domain. [4Fe-4S] cluster-binding residues include cysteine 71, cysteine 75, and cysteine 78. The [2Fe-2S] cluster site is built by cysteine 115, cysteine 147, cysteine 207, and arginine 277.

This sequence belongs to the radical SAM superfamily. Biotin synthase family. As to quaternary structure, homodimer. [4Fe-4S] cluster is required as a cofactor. The cofactor is [2Fe-2S] cluster.

It catalyses the reaction (4R,5S)-dethiobiotin + (sulfur carrier)-SH + 2 reduced [2Fe-2S]-[ferredoxin] + 2 S-adenosyl-L-methionine = (sulfur carrier)-H + biotin + 2 5'-deoxyadenosine + 2 L-methionine + 2 oxidized [2Fe-2S]-[ferredoxin]. It functions in the pathway cofactor biosynthesis; biotin biosynthesis; biotin from 7,8-diaminononanoate: step 2/2. Its function is as follows. Catalyzes the conversion of dethiobiotin (DTB) to biotin by the insertion of a sulfur atom into dethiobiotin via a radical-based mechanism. The chain is Biotin synthase from Bacillus cereus (strain B4264).